A 352-amino-acid chain; its full sequence is MAISLQKSTVVKVVGVSLVMLLAACSTDQRYKRQVSGDESYLTAPGLKPLNAPSGMILPVQNGEFDVRTVNSQGAVGKQLDIRPPVQPLTLLSGSRAENATDTSKLLLENSPQNRDLWAQVTRVLQDHNWPIASRQDASQTLTTDWIKWNRADEDVQFEGRYQISVQEQGYQLALVVKSLELQQGGKTITQYSEIQRYNSAMLNAIIEGLDKVRADSESSQASRKVGTLDVQSGSDDTGLPLLIVRAPYAVVWERLPAALEKVGMKVTDRSRPQGTVSVTSKSLSSSSWDALGAKDPELPEGDYKLQVGDLDNRSSLQFIGPKGHTLTQAQNDALVAVFQAAFSQTSATAIK.

Residues 1 to 24 form the signal peptide; it reads MAISLQKSTVVKVVGVSLVMLLAA. Residue cysteine 25 is the site of N-palmitoyl cysteine attachment. Cysteine 25 carries S-diacylglycerol cysteine lipidation.

It belongs to the BamC family. In terms of assembly, part of the Bam complex, which is composed of the outer membrane protein BamA, and four lipoproteins BamB, BamC, BamD and BamE.

It is found in the cell outer membrane. Part of the outer membrane protein assembly complex, which is involved in assembly and insertion of beta-barrel proteins into the outer membrane. This Yersinia pestis protein is Outer membrane protein assembly factor BamC.